Here is a 316-residue protein sequence, read N- to C-terminus: MSQKEQTLMTPYLQFNRHQWAALRDSVPMTLTEDEITRLKGINEDLSLEEVAEIYLPLSRLLNFYISSNLRRQAVLEQFLGTNGQRIPYIISIAGSVAVGKSTTARVLQALLSRWPEHRHVELITTDGFLHPNSVLKERGLMKKKGFPQSYDMHRLVKFVSDLKSGVPQATAPVYSHLIYDVIPDGDKTVAQPDILILEGLNVLQSGMDYPHDPHHVFVSDFVDFSIYVDAPEELLKSWYINRFLKFREGAFTDPDSYFHNYAKLSKEEAVDIATSLWNEINLMNLKENILPTRERASLIMTKSANHSVNQVRLRK.

Residue 95-102 coordinates ATP; it reads GSVAVGKS.

This sequence belongs to the prokaryotic pantothenate kinase family.

It is found in the cytoplasm. It catalyses the reaction (R)-pantothenate + ATP = (R)-4'-phosphopantothenate + ADP + H(+). It functions in the pathway cofactor biosynthesis; coenzyme A biosynthesis; CoA from (R)-pantothenate: step 1/5. The chain is Pantothenate kinase from Klebsiella pneumoniae (strain 342).